A 374-amino-acid polypeptide reads, in one-letter code: Alanine racemase (374 aa).

The active-site Proton acceptor; specific for D-alanine is Lys-35. Residue Lys-35 is modified to N6-(pyridoxal phosphate)lysine. Arg-133 is a substrate binding site. The Proton acceptor; specific for L-alanine role is filled by Tyr-261. Met-315 contributes to the substrate binding site.

The protein belongs to the alanine racemase family. Requires pyridoxal 5'-phosphate as cofactor.

The catalysed reaction is L-alanine = D-alanine. Its pathway is amino-acid biosynthesis; D-alanine biosynthesis; D-alanine from L-alanine: step 1/1. In terms of biological role, catalyzes the interconversion of L-alanine and D-alanine. May also act on other amino acids. This Psychrobacter sp. (strain PRwf-1) protein is Alanine racemase (alr).